The primary structure comprises 303 residues: Diacylglycerol kinase (303 aa).

Positions 1 to 132 (MKRARIIYNP…IDIGQVNGQY (132 aa)) constitute a DAGKc domain. ATP-binding positions include 9–13 (NPTSG), Thr40, 66–72 (GDGTINE), and Thr93. Mg(2+) contacts are provided by Ser213, Asp216, and Met218. Glu273 (proton acceptor) is an active-site residue.

It belongs to the diacylglycerol/lipid kinase family. The cofactor is Mg(2+).

The enzyme catalyses a 1,2-diacyl-sn-glycerol + ATP = a 1,2-diacyl-sn-glycero-3-phosphate + ADP + H(+). It carries out the reaction 1,2-di-(9Z-octadecenoyl)-sn-glycerol + ATP = 1,2-di-(9Z-octadecenoyl)-sn-glycero-3-phosphate + ADP + H(+). Its function is as follows. Catalyzes the phosphorylation of diacylglycerol (DAG) into phosphatidic acid. Is a key enzyme involved in the production of lipoteichoic acid by reintroducing DAG formed from the breakdown of membrane phospholipids into the phosphatidylglycerol biosynthetic pathway. Is more active toward long-chain DAG compared with short-chain DAG. Is not able to phosphorylate substrates other than DAG, such as monoacylglycerol, ceramide, undecaprenol, phosphatidylinositol, or sphingosine. The chain is Diacylglycerol kinase (dagK) from Bacillus subtilis (strain 168).